The sequence spans 155 residues: Endoribonuclease YbeY (155 aa).

The Zn(2+) site is built by His120, His124, and His130.

This sequence belongs to the endoribonuclease YbeY family. Requires Zn(2+) as cofactor.

The protein resides in the cytoplasm. Functionally, single strand-specific metallo-endoribonuclease involved in late-stage 70S ribosome quality control and in maturation of the 3' terminus of the 16S rRNA. The polypeptide is Endoribonuclease YbeY (Staphylococcus aureus (strain bovine RF122 / ET3-1)).